The primary structure comprises 485 residues: Inosine-5'-monophosphate dehydrogenase (485 aa).

2 CBS domains span residues 99–154 and 156–212; these read IVED…TVKE and MTRE…KNAV. NAD(+) is bound by residues D247 and 294-296; that span reads GIG. K(+)-binding residues include G296 and G298. S299 serves as a coordination point for IMP. C301 contributes to the K(+) binding site. The active-site Thioimidate intermediate is C301. IMP contacts are provided by residues 334–336, 357–358, and 381–385; these read DGG, GN, and YRGMG. The Proton acceptor role is filled by R397. E412 serves as a coordination point for IMP. K(+) contacts are provided by E466, S467, and H468.

It belongs to the IMPDH/GMPR family. Homotetramer. It depends on K(+) as a cofactor.

It catalyses the reaction IMP + NAD(+) + H2O = XMP + NADH + H(+). It participates in purine metabolism; XMP biosynthesis via de novo pathway; XMP from IMP: step 1/1. With respect to regulation, mycophenolic acid (MPA) is a non-competitive inhibitor that prevents formation of the closed enzyme conformation by binding to the same site as the amobile flap. In contrast, mizoribine monophosphate (MZP) is a competitive inhibitor that induces the closed conformation. MPA is a potent inhibitor of mammalian IMPDHs but a poor inhibitor of the bacterial enzymes. MZP is a more potent inhibitor of bacterial IMPDH. Functionally, catalyzes the conversion of inosine 5'-phosphate (IMP) to xanthosine 5'-phosphate (XMP), the first committed and rate-limiting step in the de novo synthesis of guanine nucleotides, and therefore plays an important role in the regulation of cell growth. The sequence is that of Inosine-5'-monophosphate dehydrogenase from Pyrococcus furiosus (strain ATCC 43587 / DSM 3638 / JCM 8422 / Vc1).